The following is a 74-amino-acid chain: UPF0270 protein NT01EI_3666 (74 aa).

It belongs to the UPF0270 family.

In Edwardsiella ictaluri (strain 93-146), this protein is UPF0270 protein NT01EI_3666.